A 677-amino-acid chain; its full sequence is Bargin (677 aa).

Low complexity-rich tracts occupy residues 1-13 and 29-39; these read MDRG…TPAV and APHAAAGPDGQ. Disordered stretches follow at residues 1 to 39 and 168 to 190; these read MDRG…PDGQ and SQAT…HSHT. The 246-residue stretch at 25–270 folds into the BAR domain; the sequence is EEAAAPHAAA…RENHGQADHS (246 aa). Phosphoserine occurs at positions 183, 270, and 272. The 194-residue stretch at 284–477 folds into the Rho-GAP domain; that stretch reads VSLATHLQEL…ALIQSADTLF (194 aa). The disordered stretch occupies residues 504 to 577; that stretch reads SEELPSTAVP…DMARRSTGSL (74 aa). Residues 516 to 530 show a composition bias toward pro residues; that stretch reads ATTPAPAPAPAPAPA. Residues serine 552 and serine 558 each carry the phosphoserine modification. Positions 574 to 677 are mediates non-covalent binding of poly-ubiquitin chains; sequence TGSLAAAVET…IADLTEGLED (104 aa).

As to expression, expressed in brain (at protein level).

Its subcellular location is the cell membrane. The protein localises to the cytoplasm. It localises to the cytosol. Functionally, GTPase activating protein (GAP) which specifically converts GTP-bound RAC1 and CDC42 in their inactive GDP-bound form. The GAP activity is enhanced by the non-covalent binding of K-29 and K-48 polyubiquitin chains. This chain is Bargin, found in Homo sapiens (Human).